Here is a 92-residue protein sequence, read N- to C-terminus: Regakine-1 (92 aa).

Positions Met1–Ala21 are cleaved as a signal peptide. 2 disulfides stabilise this stretch: Cys32–Cys56 and Cys33–Cys72.

The protein belongs to the intercrine beta (chemokine CC) family. Plasma serum.

The protein resides in the secreted. Functionally, chemotactic activity for neutrophils and lymphocytes. Binds to heparin. This Bos taurus (Bovine) protein is Regakine-1.